The sequence spans 145 residues: Lysozyme-like protein 4 (145 aa).

Positions 1–19 (MQLYLVLLLISYLLTPIGA) are cleaved as a signal peptide. The 126-residue stretch at 20 to 145 (SILGRCTVAK…LDRWLDGCDL (126 aa)) folds into the C-type lysozyme domain. Disulfide bonds link Cys25/Cys143, Cys49/Cys130, Cys84/Cys95, and Cys91/Cys109. Glu54 is an active-site residue.

The protein belongs to the glycosyl hydrolase 22 family. As to quaternary structure, monomer. Expressed strongly in testis and in epididymis, and weakly in brain and lung. Detected in sperm (at protein level).

It localises to the secreted. The protein resides in the cytoplasmic vesicle. Its subcellular location is the secretory vesicle. The protein localises to the acrosome. It is found in the cell projection. It localises to the cilium. The protein resides in the flagellum. Functionally, may be involved in fertilization. Has no detectable bacteriolytic in vitro. Has no lysozyme activity in vitro. This Mus musculus (Mouse) protein is Lysozyme-like protein 4 (Lyzl4).